The chain runs to 78 residues: Probable [Fe-S]-dependent transcriptional repressor (78 aa).

4 residues coordinate iron-sulfur cluster: cysteine 56, cysteine 61, cysteine 64, and cysteine 70.

This sequence belongs to the FeoC family.

May function as a transcriptional regulator that controls feoABC expression. The sequence is that of Probable [Fe-S]-dependent transcriptional repressor from Enterobacter sp. (strain 638).